Here is a 90-residue protein sequence, read N- to C-terminus: MNEVSIRTLNQETSKVLARVKRGEEINLTERGKVIARIIPASAGPLDSLISTGSVQPARVHGPAPRPTIPMRGGLDSGTLLERMRAEERY.

Residues 53 to 90 (GSVQPARVHGPAPRPTIPMRGGLDSGTLLERMRAEERY) form a disordered region.

The protein belongs to the phD/YefM antitoxin family.

Antitoxin component of a type II toxin-antitoxin (TA) system. Neutralizes the effect of cognate toxin VapC35. The sequence is that of Antitoxin VapB35 (vapB35) from Mycobacterium tuberculosis (strain CDC 1551 / Oshkosh).